The chain runs to 490 residues: Chromosomal replication initiator protein DnaA (490 aa).

Residues 1–75 (MAVSSDAEQK…SELWKQEDAD (75 aa)) form a domain I, interacts with DnaA modulators region. The tract at residues 75–145 (DLLKIEIVVR…SEFRHNVLGS (71 aa)) is domain II. The domain III, AAA+ region stretch occupies residues 146–368 (PLDPRYTFGS…GAFNQLLFRQ (223 aa)). Residues Gly192, Gly194, Lys195, and Thr196 each coordinate ATP. The segment at 369-490 (SFEPQITIDR…LLRRLINDQA (122 aa)) is domain IV, binds dsDNA.

It belongs to the DnaA family. Oligomerizes as a right-handed, spiral filament on DNA at oriC.

Its subcellular location is the cytoplasm. Its function is as follows. Plays an essential role in the initiation and regulation of chromosomal replication. ATP-DnaA binds to the origin of replication (oriC) to initiate formation of the DNA replication initiation complex once per cell cycle. Binds the DnaA box (a 9 base pair repeat at the origin) and separates the double-stranded (ds)DNA. Forms a right-handed helical filament on oriC DNA; dsDNA binds to the exterior of the filament while single-stranded (ss)DNA is stabiized in the filament's interior. The ATP-DnaA-oriC complex binds and stabilizes one strand of the AT-rich DNA unwinding element (DUE), permitting loading of DNA polymerase. After initiation quickly degrades to an ADP-DnaA complex that is not apt for DNA replication. Binds acidic phospholipids. The chain is Chromosomal replication initiator protein DnaA from Mesorhizobium japonicum (strain LMG 29417 / CECT 9101 / MAFF 303099) (Mesorhizobium loti (strain MAFF 303099)).